We begin with the raw amino-acid sequence, 391 residues long: Chorismate synthase (391 aa).

Position 48 (arginine 48) interacts with NADP(+). Residues 126-128, glycine 286, 301-305, and arginine 328 contribute to the FMN site; these read RAS and KPTSS.

The protein belongs to the chorismate synthase family. FMNH2 is required as a cofactor.

The enzyme catalyses 5-O-(1-carboxyvinyl)-3-phosphoshikimate = chorismate + phosphate. The protein operates within metabolic intermediate biosynthesis; chorismate biosynthesis; chorismate from D-erythrose 4-phosphate and phosphoenolpyruvate: step 7/7. Its function is as follows. Catalyzes the anti-1,4-elimination of the C-3 phosphate and the C-6 proR hydrogen from 5-enolpyruvylshikimate-3-phosphate (EPSP) to yield chorismate, which is the branch point compound that serves as the starting substrate for the three terminal pathways of aromatic amino acid biosynthesis. This reaction introduces a second double bond into the aromatic ring system. The chain is Chorismate synthase from Saccharolobus solfataricus (strain ATCC 35092 / DSM 1617 / JCM 11322 / P2) (Sulfolobus solfataricus).